A 145-amino-acid chain; its full sequence is UPF0310 protein Mvan_0064 (145 aa).

This sequence belongs to the UPF0310 family.

The sequence is that of UPF0310 protein Mvan_0064 from Mycolicibacterium vanbaalenii (strain DSM 7251 / JCM 13017 / BCRC 16820 / KCTC 9966 / NRRL B-24157 / PYR-1) (Mycobacterium vanbaalenii).